The sequence spans 81 residues: EC protein I/II (81 aa).

The protein belongs to the metallothionein superfamily. Type 15 family.

In terms of biological role, binds 5 molecules of zinc. May have a role in Zn(2+) homeostasis during embryogenesis. The protein is EC protein I/II of Triticum aestivum (Wheat).